Consider the following 1751-residue polypeptide: Non-reducing polyketide synthase afvB (1751 aa).

The tract at residues Phe-19 to His-249 is N-terminal acylcarrier protein transacylase domain (SAT). The region spanning His-381 to Glu-811 is the Ketosynthase family 3 (KS3) domain. Active-site for beta-ketoacyl synthase activity residues include Cys-554, His-689, and His-730. Positions Phe-910–Val-1228 are malonyl-CoA:ACP transacylase (MAT) domain. Positions Thr-1291–Asp-1607 are product template (PT) domain. The interval His-1295–Ser-1429 is N-terminal hotdog fold. A PKS/mFAS DH domain is found at His-1295–Ser-1603. His-1327 serves as the catalytic Proton acceptor; for dehydratase activity. The interval Leu-1456–Ser-1603 is C-terminal hotdog fold. Asp-1514 (proton donor; for dehydratase activity) is an active-site residue. The segment at Asp-1610 to Asn-1670 is disordered. Over residues Gln-1612 to Glu-1657 the composition is skewed to polar residues. The Carrier domain maps to Asn-1670–Gln-1747. Ser-1707 is modified (O-(pantetheine 4'-phosphoryl)serine).

It depends on pantetheine 4'-phosphate as a cofactor. Expressed mainly in sclerotia, with expression levels 20-fold and 10-fold greater than the expression levels of this gene found in mycelium and conidia, respectively.

It participates in secondary metabolite biosynthesis. Its function is as follows. Non-reducing polyketide synthase (NRPKS); part of the gene cluster that mediates the biosynthesis of aflavarin, a bicoumarin that exhibits anti-insectan activity against the fungivorous beetle C.hemipterus. Catalyzes the formation of the aromatic polyketide from acetyl coenzyme A and seven malonyl coenzyme A molecules. This Aspergillus flavus (strain ATCC 200026 / FGSC A1120 / IAM 13836 / NRRL 3357 / JCM 12722 / SRRC 167) protein is Non-reducing polyketide synthase afvB.